The following is a 59-amino-acid chain: Alpha-like toxin CsEv5 (59 aa).

The 59-residue stretch at 1–59 (KDGYPVDSKGCKLSCVANNYCDNQCKMKKASGGHCYAMSCYCEGLPENAKVSDSATNIC) folds into the LCN-type CS-alpha/beta domain. 4 disulfide bridges follow: cysteine 11/cysteine 59, cysteine 15/cysteine 35, cysteine 21/cysteine 40, and cysteine 25/cysteine 42.

This sequence belongs to the long (4 C-C) scorpion toxin superfamily. Sodium channel inhibitor family. As to expression, expressed by the venom gland.

It localises to the secreted. Functionally, binds voltage-independently sodium channels (Nav) and inhibits the inactivation of the activated channels, thereby blocking neuronal transmission. Is highly toxic to insects and barely toxic to mammals. As it does not compete with the classical alpha-toxin AaH2, this toxin is considered as an alpha-like toxin. The sequence is that of Alpha-like toxin CsEv5 from Centruroides sculpturatus (Arizona bark scorpion).